Consider the following 366-residue polypeptide: Histidinol-phosphate aminotransferase (366 aa).

Lys-228 is modified (N6-(pyridoxal phosphate)lysine).

It belongs to the class-II pyridoxal-phosphate-dependent aminotransferase family. Histidinol-phosphate aminotransferase subfamily. Homodimer. Pyridoxal 5'-phosphate serves as cofactor.

It catalyses the reaction L-histidinol phosphate + 2-oxoglutarate = 3-(imidazol-4-yl)-2-oxopropyl phosphate + L-glutamate. It participates in amino-acid biosynthesis; L-histidine biosynthesis; L-histidine from 5-phospho-alpha-D-ribose 1-diphosphate: step 7/9. This chain is Histidinol-phosphate aminotransferase, found in Corynebacterium diphtheriae (strain ATCC 700971 / NCTC 13129 / Biotype gravis).